The sequence spans 757 residues: Two pore calcium channel protein 1 (757 aa).

Residues Met1–Arg94 lie on the Cytoplasmic side of the membrane. The tract at residues His24–Arg48 is disordered. The segment covering Gly29–Arg45 has biased composition (gly residues). Residues Phe95–Leu115 traverse the membrane as a helical segment. The Extracellular portion of the chain corresponds to Leu116–Ser152. Residues Leu153–Tyr173 traverse the membrane as a helical segment. The Cytoplasmic segment spans residues Glu174–Lys188. The chain crosses the membrane as a helical span at residues Val189–Phe209. Arg210 is a topological domain (extracellular). The chain crosses the membrane as a helical; Voltage-sensor span at residues Val211 to Arg228. Topologically, residues Met229 to Thr233 are cytoplasmic. The chain crosses the membrane as a helical span at residues Leu234–Phe254. Residues Ala255–Lys270 lie on the Extracellular side of the membrane. Positions Thr271–Ile285 form an intramembrane region, pore-forming. The Extracellular portion of the chain corresponds to Leu286–Leu308. A helical membrane pass occupies residues Phe309–Ile329. The Cytoplasmic segment spans residues Tyr330–Arg453. 2 consecutive EF-hand domains span residues Thr347–Tyr382 and Thr388–Lys423. A helical transmembrane segment spans residues Ser454–Ile474. Over Glu475–Glu493 the chain is Extracellular. An N-linked (GlcNAc...) asparagine glycan is attached at Asn482. A helical transmembrane segment spans residues Phe494–Gly514. The Cytoplasmic portion of the chain corresponds to Ala515–Lys523. Residues Phe524–Ser544 traverse the membrane as a helical segment. Residues Lys545–Glu553 are Extracellular-facing. A helical; Voltage-sensor transmembrane segment spans residues Trp554–Leu571. Residues Gln572–Gly595 are Cytoplasmic-facing. A helical membrane pass occupies residues Ile596–Val616. The Extracellular segment spans residues Tyr617–Asp640. The segment at residues Tyr641–Gly655 is an intramembrane region (pore-forming). Residues Asn656 to Tyr676 lie on the Extracellular side of the membrane. A helical transmembrane segment spans residues Phe677–Leu697. Topologically, residues Glu698–Gln757 are cytoplasmic.

Belongs to the calcium channel alpha-1 subunit (TC 1.A.1.11) family. Two pore calcium channel subfamily. In terms of assembly, homodimer. Expressed in shoot, mature leaf, cultured cells, and at lower level in roots.

It is found in the membrane. Its activity is regulated as follows. Inhibited by the VDCC blocker verapamil in yeast cells. Channel activity may be down-regulated by cytosolic Ca(2+) in rice cells. Inhibited by Al(3+). Functionally, may function as one of the major voltage-gated Ca(2+) channel (VDCC) across the plasma membrane. May be involved in the regulation of cytosolic Ca(2+) and in growth and development. Acts as the major ROS-responsive Ca(2+) channel and is the possible target of Al-dependent inhibition. Determines sensitivity to T.viride xylanase elicitor. Plays a regulatory role in elicitor-induced defense responses and hypersensitive cell death. The chain is Two pore calcium channel protein 1 (TPC1) from Oryza sativa subsp. japonica (Rice).